The primary structure comprises 117 residues: Large ribosomal subunit protein bL20 (117 aa).

It belongs to the bacterial ribosomal protein bL20 family.

Functionally, binds directly to 23S ribosomal RNA and is necessary for the in vitro assembly process of the 50S ribosomal subunit. It is not involved in the protein synthesizing functions of that subunit. This chain is Large ribosomal subunit protein bL20, found in Mesomycoplasma hyopneumoniae (strain 7448) (Mycoplasma hyopneumoniae).